Consider the following 234-residue polypeptide: MKPKVVAIVPAGGSGRRMQSSNPKQYFLINGMPVLVHTLLRLQQFPLIDEILLVVPHSDMVFVRDNIEKPYQLTKIRGIVAGGRERQDSVRNGLKCVVEKDEIVVIHDGVRPFVTEKILSRVIDAAHRSGAAIAAVPAMDTVKEVHSDGHISVTLDRKRIWLAQTPQAFHRRIIQEAYKKAVQDDYYGTDDASLVERLGIPVEVVPGSCTNIKITTPDDLILAEAFLKKEEGRI.

It belongs to the IspD/TarI cytidylyltransferase family. IspD subfamily.

It carries out the reaction 2-C-methyl-D-erythritol 4-phosphate + CTP + H(+) = 4-CDP-2-C-methyl-D-erythritol + diphosphate. It participates in isoprenoid biosynthesis; isopentenyl diphosphate biosynthesis via DXP pathway; isopentenyl diphosphate from 1-deoxy-D-xylulose 5-phosphate: step 2/6. Functionally, catalyzes the formation of 4-diphosphocytidyl-2-C-methyl-D-erythritol from CTP and 2-C-methyl-D-erythritol 4-phosphate (MEP). In Syntrophus aciditrophicus (strain SB), this protein is 2-C-methyl-D-erythritol 4-phosphate cytidylyltransferase.